Here is a 555-residue protein sequence, read N- to C-terminus: Serine/threonine-protein kinase Nek4 (555 aa).

Positions Tyr4–Leu258 constitute a Protein kinase domain. ATP is bound by residues Ile10–Ala18 and Lys33. Asp129 functions as the Proton acceptor in the catalytic mechanism. 3 disordered regions span residues Leu288 to Gly328, Gln346 to Thr372, and Asn443 to Asp477. Residues Pro304–Ala320 are compositionally biased toward polar residues.

Belongs to the protein kinase superfamily. NEK Ser/Thr protein kinase family. NIMA subfamily.

It catalyses the reaction L-seryl-[protein] + ATP = O-phospho-L-seryl-[protein] + ADP + H(+). The enzyme catalyses L-threonyl-[protein] + ATP = O-phospho-L-threonyl-[protein] + ADP + H(+). Functionally, may be involved in plant development processes. This Arabidopsis thaliana (Mouse-ear cress) protein is Serine/threonine-protein kinase Nek4 (NEK4).